The chain runs to 206 residues: MPTVGLFNQEGKQVGDIQLNANVFEVEVNKHALHQVVVALLANKRQGTQSAKTRTEVRGGGIKPWRQKGTGRARQGSIRAPQWIKGGIVFAPKPRDYRVSIPKSMRRVAMKSALTSKVNDGQMVVLESLSFEAPKTKQFIEMLSAFNAKKTLIITAESNEAVYKSARNIQGVSVIPVNNINVYDLLKFEKLIITKDAVSKIEEVYA.

Residues 49-76 (QSAKTRTEVRGGGIKPWRQKGTGRARQG) form a disordered region.

It belongs to the universal ribosomal protein uL4 family. As to quaternary structure, part of the 50S ribosomal subunit.

In terms of biological role, one of the primary rRNA binding proteins, this protein initially binds near the 5'-end of the 23S rRNA. It is important during the early stages of 50S assembly. It makes multiple contacts with different domains of the 23S rRNA in the assembled 50S subunit and ribosome. Its function is as follows. Forms part of the polypeptide exit tunnel. This chain is Large ribosomal subunit protein uL4, found in Clostridium botulinum (strain Alaska E43 / Type E3).